A 325-amino-acid chain; its full sequence is Beta-ketoacyl-[acyl-carrier-protein] synthase III (325 aa).

Active-site residues include C116 and H252. The segment at 253 to 257 is ACP-binding; the sequence is QANLR. Residue N282 is part of the active site.

It belongs to the thiolase-like superfamily. FabH family. As to quaternary structure, homodimer.

It localises to the cytoplasm. It catalyses the reaction malonyl-[ACP] + acetyl-CoA + H(+) = 3-oxobutanoyl-[ACP] + CO2 + CoA. It participates in lipid metabolism; fatty acid biosynthesis. Its function is as follows. Catalyzes the condensation reaction of fatty acid synthesis by the addition to an acyl acceptor of two carbons from malonyl-ACP. Catalyzes the first condensation reaction which initiates fatty acid synthesis and may therefore play a role in governing the total rate of fatty acid production. Possesses both acetoacetyl-ACP synthase and acetyl transacylase activities. Its substrate specificity determines the biosynthesis of branched-chain and/or straight-chain of fatty acids. The chain is Beta-ketoacyl-[acyl-carrier-protein] synthase III from Xanthomonas campestris pv. campestris (strain ATCC 33913 / DSM 3586 / NCPPB 528 / LMG 568 / P 25).